The sequence spans 211 residues: MPYVLPALSYAYDALEPHIDARTMEIHHTRHHQTYVNGLNAALEGAGLDSEEPVEQLLRRIPALPPGIHGAVRNHGGGHANHSLLWTVMSPSGGGRPDGRLAADIQAQLGGHDAFQAAFTQAALGRFGSGWAWLTVTPAGRLRVDSSANQDSPLMEGNTPILGLDVWEHAYYLQYQNRRPEYIEAFYRVVDWAEVARRYEIALAELGREAA.

4 residues coordinate Mn(2+): His-27, His-82, Asp-165, and His-169.

Belongs to the iron/manganese superoxide dismutase family. As to quaternary structure, homodimer. Mn(2+) is required as a cofactor.

The enzyme catalyses 2 superoxide + 2 H(+) = H2O2 + O2. Its function is as follows. Destroys superoxide anion radicals which are normally produced within the cells and which are toxic to biological systems. This is Superoxide dismutase [Mn] (sodA) from Bordetella pertussis (strain Tohama I / ATCC BAA-589 / NCTC 13251).